Consider the following 358-residue polypeptide: Uroporphyrinogen decarboxylase (358 aa).

Residues R27–R31, D77, Y154, S209, and H327 each bind substrate.

The protein belongs to the uroporphyrinogen decarboxylase family. Homodimer.

The protein resides in the cytoplasm. It carries out the reaction uroporphyrinogen III + 4 H(+) = coproporphyrinogen III + 4 CO2. It functions in the pathway porphyrin-containing compound metabolism; protoporphyrin-IX biosynthesis; coproporphyrinogen-III from 5-aminolevulinate: step 4/4. Catalyzes the decarboxylation of four acetate groups of uroporphyrinogen-III to yield coproporphyrinogen-III. The chain is Uroporphyrinogen decarboxylase from Azoarcus sp. (strain BH72).